The primary structure comprises 796 residues: Inactive dipeptidyl peptidase 10 (796 aa).

Residues 1-34 (MNQTASVSHHIKCQPSKTIKELGSNSPPQRNWKG) lie on the Cytoplasmic side of the membrane. The interval 1–55 (MNQTASVSHHIKCQPSKTIKELGSNSPPQRNWKGIAIALLVILVVCSLITMSVIL) is mediates effects on KCND2. Residues 35-55 (IAIALLVILVVCSLITMSVIL) traverse the membrane as a helical; Signal-anchor for type II membrane protein segment. Over 56-796 (LTPDELTNSS…VLPQEPEEDE (741 aa)) the chain is Extracellular. N-linked (GlcNAc...) asparagine glycosylation is found at N63, N90, N111, and N119. A phosphotyrosine mark is found at Y138 and Y143. N257, N342, and N748 each carry an N-linked (GlcNAc...) asparagine glycan.

Belongs to the peptidase S9B family. DPPIV subfamily. May form oligomers. Interacts with KCND1. Interacts with KCND2. Identified in a complex with KCND2 and KCNIP3. In terms of processing, N-glycosylation is important for cell surface expression, specially at Asn-257, which is crucial. Detected in brain cortex, hippocampus, thalamus and cerebellum Purkinje cells (at protein level).

It is found in the cell membrane. Functionally, promotes cell surface expression of the potassium channel KCND2. Modulates the activity and gating characteristics of the potassium channel KCND2. Has no dipeptidyl aminopeptidase activity. This chain is Inactive dipeptidyl peptidase 10 (Dpp10), found in Rattus norvegicus (Rat).